Here is a 447-residue protein sequence, read N- to C-terminus: Argininosuccinate synthase (447 aa).

Residues Ala-17 to Ser-25 and Ala-43 each bind ATP. Tyr-99 is an L-citrulline binding site. ATP-binding residues include Gly-129 and Thr-131. 3 residues coordinate L-aspartate: Thr-131, Asn-135, and Asp-136. Position 135 (Asn-135) interacts with L-citrulline. An ATP-binding site is contributed by Asp-136. L-citrulline-binding residues include Arg-139 and Ser-192. Residue Asp-194 coordinates ATP. L-citrulline is bound by residues Thr-201, Glu-203, and Glu-280.

This sequence belongs to the argininosuccinate synthase family. Type 2 subfamily. In terms of assembly, homotetramer.

It localises to the cytoplasm. It catalyses the reaction L-citrulline + L-aspartate + ATP = 2-(N(omega)-L-arginino)succinate + AMP + diphosphate + H(+). The protein operates within amino-acid biosynthesis; L-arginine biosynthesis; L-arginine from L-ornithine and carbamoyl phosphate: step 2/3. This chain is Argininosuccinate synthase, found in Salmonella schwarzengrund (strain CVM19633).